We begin with the raw amino-acid sequence, 185 residues long: Ribosome-recycling factor (185 aa).

This sequence belongs to the RRF family.

The protein resides in the cytoplasm. In terms of biological role, responsible for the release of ribosomes from messenger RNA at the termination of protein biosynthesis. May increase the efficiency of translation by recycling ribosomes from one round of translation to another. The polypeptide is Ribosome-recycling factor (Thermobifida fusca (strain YX)).